The primary structure comprises 328 residues: 2,3-diketo-L-gulonate-binding periplasmic protein YiaO (328 aa).

A signal peptide spans 1–24 (MKLRSVTYALFIAGLAAFSTSSLA).

In terms of assembly, the complex comprises the extracytoplasmic solute receptor protein YiaO, and the two transmembrane proteins YiaM and YiaN.

The protein localises to the periplasm. Part of the tripartite ATP-independent periplasmic (TRAP) transport system YiaMNO involved in the uptake of 2,3-diketo-L-gulonate. This protein specifically binds 2,3-diketo-L-gulonate. Is not able to bind either L-ascorbate or dehydroascorbate. This is 2,3-diketo-L-gulonate-binding periplasmic protein YiaO (yiaO) from Escherichia coli (strain K12).